A 967-amino-acid chain; its full sequence is Isoleucine--tRNA ligase 2 (967 aa).

The 'HIGH' region motif lies at 58-68 (PYANGDIHIGH). Over residues 437-446 (AVTEEAGATG) the composition is skewed to low complexity. Residues 437-466 (AVTEEAGATGEARKVGKAEEAEEAGPAKTL) form a disordered region. Residue Glu598 participates in L-isoleucyl-5'-AMP binding. The 'KMSKS' region motif lies at 639–643 (KMSKS). Residue Lys642 participates in ATP binding. Residues Cys922, Cys925, Cys942, and Cys945 each coordinate Zn(2+).

This sequence belongs to the class-I aminoacyl-tRNA synthetase family. IleS type 1 subfamily. Monomer. It depends on Zn(2+) as a cofactor.

The protein resides in the cytoplasm. The enzyme catalyses tRNA(Ile) + L-isoleucine + ATP = L-isoleucyl-tRNA(Ile) + AMP + diphosphate. Its function is as follows. Catalyzes the attachment of isoleucine to tRNA(Ile). As IleRS can inadvertently accommodate and process structurally similar amino acids such as valine, to avoid such errors it has two additional distinct tRNA(Ile)-dependent editing activities. One activity is designated as 'pretransfer' editing and involves the hydrolysis of activated Val-AMP. The other activity is designated 'posttransfer' editing and involves deacylation of mischarged Val-tRNA(Ile). The protein is Isoleucine--tRNA ligase 2 of Burkholderia mallei (strain ATCC 23344).